Here is a 245-residue protein sequence, read N- to C-terminus: 1-(5-phosphoribosyl)-5-[(5-phosphoribosylamino)methylideneamino] imidazole-4-carboxamide isomerase (245 aa).

Catalysis depends on aspartate 7, which acts as the Proton acceptor. Aspartate 129 serves as the catalytic Proton donor.

It belongs to the HisA/HisF family.

It is found in the cytoplasm. It catalyses the reaction 1-(5-phospho-beta-D-ribosyl)-5-[(5-phospho-beta-D-ribosylamino)methylideneamino]imidazole-4-carboxamide = 5-[(5-phospho-1-deoxy-D-ribulos-1-ylimino)methylamino]-1-(5-phospho-beta-D-ribosyl)imidazole-4-carboxamide. The protein operates within amino-acid biosynthesis; L-histidine biosynthesis; L-histidine from 5-phospho-alpha-D-ribose 1-diphosphate: step 4/9. This Shewanella pealeana (strain ATCC 700345 / ANG-SQ1) protein is 1-(5-phosphoribosyl)-5-[(5-phosphoribosylamino)methylideneamino] imidazole-4-carboxamide isomerase.